The following is a 328-amino-acid chain: UPF0421 protein SAUSA300_1870 (328 aa).

A run of 4 helical transmembrane segments spans residues isoleucine 19–isoleucine 39, leucine 61–glutamine 81, valine 108–phenylalanine 128, and threonine 132–proline 152.

Belongs to the UPF0421 family.

The protein localises to the cell membrane. This Staphylococcus aureus (strain USA300) protein is UPF0421 protein SAUSA300_1870.